The sequence spans 499 residues: Bifunctional purine biosynthesis protein PurH (499 aa).

Positions 1–144 (MIKRALISVF…KNFKDVVVLT (144 aa)) constitute an MGS-like domain.

This sequence belongs to the PurH family.

The catalysed reaction is (6R)-10-formyltetrahydrofolate + 5-amino-1-(5-phospho-beta-D-ribosyl)imidazole-4-carboxamide = 5-formamido-1-(5-phospho-D-ribosyl)imidazole-4-carboxamide + (6S)-5,6,7,8-tetrahydrofolate. It catalyses the reaction IMP + H2O = 5-formamido-1-(5-phospho-D-ribosyl)imidazole-4-carboxamide. It participates in purine metabolism; IMP biosynthesis via de novo pathway; 5-formamido-1-(5-phospho-D-ribosyl)imidazole-4-carboxamide from 5-amino-1-(5-phospho-D-ribosyl)imidazole-4-carboxamide (10-formyl THF route): step 1/1. The protein operates within purine metabolism; IMP biosynthesis via de novo pathway; IMP from 5-formamido-1-(5-phospho-D-ribosyl)imidazole-4-carboxamide: step 1/1. This is Bifunctional purine biosynthesis protein PurH from Clostridium botulinum (strain Hall / ATCC 3502 / NCTC 13319 / Type A).